The chain runs to 298 residues: 3-sulfolactaldehyde reductase (298 aa).

Residues 11 to 12, aspartate 31, leucine 65, and threonine 96 contribute to the NAD(+) site; that span reads QM. Arginine 123 lines the 2,3-dihydroxypropane-1-sulfonate pocket. The active site involves lysine 171. Position 174–178 (174–178) interacts with 2,3-dihydroxypropane-1-sulfonate; sequence NNYMS. Position 240 (lysine 240) interacts with NAD(+).

Belongs to the HIBADH-related family. 3-sulfolactaldehyde reductase subfamily. Homotetramer. Dimer of dimers.

It catalyses the reaction (2S)-3-sulfopropanediol + NAD(+) = (2S)-3-sulfolactaldehyde + NADH + H(+). The enzyme catalyses 4-hydroxybutanoate + NAD(+) = succinate semialdehyde + NADH + H(+). With respect to regulation, inhibited by the NADH analogs tetrahydro-NADH and hexahydro-NADH. In terms of biological role, reduces 3-sulfolactaldehyde (SLA) to 2,3-dihydroxypropane 1-sulfonate (DHPS). Metabolite profiling studies showed that the enzyme also catalyzes in vitro the NADH-dependent reduction of succinic semialdehyde (SSA) to 4-hydroxybutyrate (GHB), and that it could be involved in the metabolism of SSA, and other potentially toxic intermediates that may accumulate under stress conditions. However, the enzyme exhibits a 42,000-fold greater catalytic efficiency for the reduction of SLA over SSA. Shows no detectable activity on the analogous glycolytic intermediate glyceraldehyde-3-phosphate. The chain is 3-sulfolactaldehyde reductase (yihU) from Escherichia coli (strain K12).